The chain runs to 833 residues: Transmembrane protease serine 7 (833 aa).

Over Met1–Lys62 the chain is Cytoplasmic. A disordered region spans residues Lys30–Gln49. Over residues Pro32 to Gln49 the composition is skewed to basic residues. Residues Ile63 to Leu83 traverse the membrane as a helical; Signal-anchor for type II membrane protein segment. At Tyr84–Val829 the chain is on the extracellular side. The SEA domain occupies Asp92–Arg220. The N-linked (GlcNAc...) asparagine glycan is linked to Asn196. Cystine bridges form between Cys233–Cys259, Cys285–Cys312, and Cys355–Cys386. 2 CUB domains span residues Cys233–Ile350 and Cys355–Ser471. Asn405 and Asn469 each carry an N-linked (GlcNAc...) asparagine glycan. LDL-receptor class A domains follow at residues Pro473–Val509 and Pro548–Gly585. 7 cysteine pairs are disulfide-bonded: Cys474–Cys486, Cys481–Cys499, Cys493–Cys508, Cys549–Cys561, Cys556–Cys575, Cys569–Cys584, and Cys621–Cys637. A Peptidase S1 domain is found at Val596–Pro830. Active-site charge relay system residues include His636 and Asp684. 3 disulfides stabilise this stretch: Cys720/Cys786, Cys752/Cys765, and Cys776/Cys806. Ser780 (charge relay system) is an active-site residue.

Belongs to the peptidase S1 family. In terms of assembly, forms a heterodimer with SERPINA5. N-glycosylated.

It is found in the cell membrane. In terms of biological role, serine protease which preferentially hydrolyzes peptides with Arg at the P1 position. This chain is Transmembrane protease serine 7, found in Rattus norvegicus (Rat).